The following is a 379-amino-acid chain: 3-dehydroquinate synthase (379 aa).

The protein belongs to the archaeal-type DHQ synthase family.

It carries out the reaction 2-amino-2,3,7-trideoxy-D-lyxo-hept-6-ulosonate + NAD(+) + H2O = 3-dehydroquinate + NH4(+) + NADH + H(+). In terms of biological role, catalyzes the oxidative deamination and cyclization of 2-amino-3,7-dideoxy-D-threo-hept-6-ulosonic acid (ADH) to yield 3-dehydroquinate (DHQ), which is fed into the canonical shikimic pathway of aromatic amino acid biosynthesis. The sequence is that of 3-dehydroquinate synthase from Methanococcoides burtonii (strain DSM 6242 / NBRC 107633 / OCM 468 / ACE-M).